The primary structure comprises 404 residues: tRNA pseudouridine synthase D (404 aa).

Catalysis depends on Asp79, which acts as the Nucleophile. The region spanning 154 to 364 is the TRUD domain; it reads GVPNRFGEQR…MEGERRPLRV (211 aa).

Belongs to the pseudouridine synthase TruD family.

It catalyses the reaction uridine(13) in tRNA = pseudouridine(13) in tRNA. Its function is as follows. Responsible for synthesis of pseudouridine from uracil-13 in transfer RNAs. The chain is tRNA pseudouridine synthase D from Geobacter metallireducens (strain ATCC 53774 / DSM 7210 / GS-15).